The chain runs to 86 residues: Small ribosomal subunit protein uS17 (86 aa).

Belongs to the universal ribosomal protein uS17 family. Part of the 30S ribosomal subunit.

Its function is as follows. One of the primary rRNA binding proteins, it binds specifically to the 5'-end of 16S ribosomal RNA. The protein is Small ribosomal subunit protein uS17 of Tropheryma whipplei (strain TW08/27) (Whipple's bacillus).